The primary structure comprises 285 residues: Glutamate racemase (285 aa).

Substrate-binding positions include 28–29 (DS) and 60–61 (YG). The active-site Proton donor/acceptor is the Cys-92. A substrate-binding site is contributed by 93-94 (NT). Residue Cys-204 is the Proton donor/acceptor of the active site. 205-206 (TH) serves as a coordination point for substrate.

It belongs to the aspartate/glutamate racemases family.

It catalyses the reaction L-glutamate = D-glutamate. The protein operates within cell wall biogenesis; peptidoglycan biosynthesis. Its function is as follows. Provides the (R)-glutamate required for cell wall biosynthesis. This chain is Glutamate racemase, found in Escherichia coli O6:H1 (strain CFT073 / ATCC 700928 / UPEC).